The primary structure comprises 815 residues: Leucine--tRNA ligase (815 aa).

Positions 40 to 50 (PYPSGRIHMGH) match the 'HIGH' region motif. The short motif at 583–587 (KMSKS) is the 'KMSKS' region element. Position 586 (K586) interacts with ATP.

It belongs to the class-I aminoacyl-tRNA synthetase family.

It localises to the cytoplasm. The enzyme catalyses tRNA(Leu) + L-leucine + ATP = L-leucyl-tRNA(Leu) + AMP + diphosphate. The sequence is that of Leucine--tRNA ligase from Nitratiruptor sp. (strain SB155-2).